The following is a 126-amino-acid chain: Aspartate 1-decarboxylase (126 aa).

Residue serine 25 is the Schiff-base intermediate with substrate; via pyruvic acid of the active site. A Pyruvic acid (Ser) modification is found at serine 25. Residue threonine 57 coordinates substrate. The active-site Proton donor is the tyrosine 58. Glycine 73–alanine 75 provides a ligand contact to substrate.

This sequence belongs to the PanD family. As to quaternary structure, heterooctamer of four alpha and four beta subunits. It depends on pyruvate as a cofactor. Post-translationally, is synthesized initially as an inactive proenzyme, which is activated by self-cleavage at a specific serine bond to produce a beta-subunit with a hydroxyl group at its C-terminus and an alpha-subunit with a pyruvoyl group at its N-terminus.

It localises to the cytoplasm. It carries out the reaction L-aspartate + H(+) = beta-alanine + CO2. Its pathway is cofactor biosynthesis; (R)-pantothenate biosynthesis; beta-alanine from L-aspartate: step 1/1. Its function is as follows. Catalyzes the pyruvoyl-dependent decarboxylation of aspartate to produce beta-alanine. This is Aspartate 1-decarboxylase from Salmonella dublin (strain CT_02021853).